The following is a 511-amino-acid chain: Ribonuclease E/G-like protein (511 aa).

The region spanning 35 to 117 (SDIYLGTVDK…LTANITLSGR (83 aa)) is the S1 motif domain. Residues Asp-296 and Asp-339 each contribute to the Mg(2+) site.

Belongs to the RNase E/G family. Mg(2+) serves as cofactor.

It localises to the plastid. It is found in the chloroplast stroma. Functionally, involved in intercistronic processing of primary transcripts from chloroplast operons. The endonucleolytic activity of the enzyme depends on the number of phosphates at the 5' end, is inhibited by structured RNA, and preferentially cleaves A/U-rich sequences. The sequence is that of Ribonuclease E/G-like protein (rne) from Porphyra purpurea (Red seaweed).